The chain runs to 755 residues: von Willebrand factor A domain-containing protein 2 (755 aa).

Residues 1–23 (MPPFLLLEAVCVFLFSRVPPSLP) form the signal peptide. A VWFA 1 domain is found at 51–222 (DIMFLLDGSN…DATNGLFSTL (172 aa)). N-linked (GlcNAc...) asparagine glycosylation is present at asparagine 147. One can recognise an EGF-like 1 domain in the interval 296 to 333 (PGPCDSQPCQNGGTCVPEGLDGYQCLCPLAFGGEANCA). 3 cysteine pairs are disulfide-bonded: cysteine 299-cysteine 310, cysteine 304-cysteine 320, and cysteine 322-cysteine 332. VWFA domains lie at 343 to 517 (DLLF…QGKL) and 531 to 705 (DLVF…IEWL). In terms of domain architecture, EGF-like 2 spans 712–748 (PVNLCKPSPCMNEGSCVLQNGSYRCKCRDGWEGPHCE). 3 cysteine pairs are disulfide-bonded: cysteine 716/cysteine 727, cysteine 721/cysteine 736, and cysteine 738/cysteine 747.

Forms monomers and multimers. In terms of processing, a 55 kDa form is produced by proteolytic cleavage. In terms of tissue distribution, expression is generally absent in normal colon and other normal body tissues, but it is induced an average of 78-fold in Stage II, III, and IV colon cancers, as well as in colon adenomas and colon cancer cell lines.

It localises to the secreted. In Homo sapiens (Human), this protein is von Willebrand factor A domain-containing protein 2 (VWA2).